Reading from the N-terminus, the 360-residue chain is DNA replication and repair protein RecF (360 aa).

An ATP-binding site is contributed by 30–37 (GQNGSGKT).

Belongs to the RecF family.

It localises to the cytoplasm. Functionally, the RecF protein is involved in DNA metabolism; it is required for DNA replication and normal SOS inducibility. RecF binds preferentially to single-stranded, linear DNA. It also seems to bind ATP. The polypeptide is DNA replication and repair protein RecF (Shewanella oneidensis (strain ATCC 700550 / JCM 31522 / CIP 106686 / LMG 19005 / NCIMB 14063 / MR-1)).